The chain runs to 62 residues: MARYRHSRSRSRSRYRRRRRRRSRYRSRRRRYRGSRRSRSRRRGRRRGYSRRRYSRRRRRRY.

The segment at Met-1–Tyr-62 is disordered.

Belongs to the protamine P1 family. As to expression, testis.

It localises to the nucleus. It is found in the chromosome. Protamines substitute for histones in the chromatin of sperm during the haploid phase of spermatogenesis. They compact sperm DNA into a highly condensed, stable and inactive complex. This chain is Sperm protamine P1 (PRM1), found in Lagostrophus fasciatus (Banded hare-wallaby).